The primary structure comprises 479 residues: Transmembrane protein 161A (479 aa).

Residues 1–28 (MAVLGVQLVVTLLTATLMHRLAPHCSFA) form the signal peptide. Topologically, residues 29–98 (RWLLCNGSLF…LTTVDALVLR (70 aa)) are extracellular. An N-linked (GlcNAc...) asparagine glycan is attached at N34. The residue at position 69 (S69) is a Phosphoserine. A helical membrane pass occupies residues 99 to 119 (FFLEYQWFVDFAVYSGGVYLF). Residues 120-134 (TEAYYYMLGPAKETN) are Cytoplasmic-facing. A helical transmembrane segment spans residues 135–155 (IAVFWCLLTVTFSIKMFLTVT). Topologically, residues 156 to 166 (RLYFSAEEGGE) are extracellular. A helical transmembrane segment spans residues 167–187 (RSVCLTFAFLFLLLAMLVQVV). Residues 188-224 (REETLELGLEPGLASMTQNLEPLLKKQGWDWALPVAK) lie on the Cytoplasmic side of the membrane. A helical membrane pass occupies residues 225 to 245 (LAIRVGLAVVGSVLGAFLTFP). Residues 246–263 (GLRLAQTHRDALTMSEDR) are Extracellular-facing. Residues 264–284 (PMLQFLLHTSFLSPLFILWLW) form a helical membrane-spanning segment. Topologically, residues 285–304 (TKPIARDFLHQPPFGETRFS) are cytoplasmic. The chain crosses the membrane as a helical span at residues 305–325 (LLSDSAFDSGRLWLLVVLCLL). Topologically, residues 326–370 (RLAVTRPHLQAYLCLAKARVEQLRREAGRIEAREIQQRVVRVYCY) are extracellular. Residues 371 to 391 (VTVVSLQYLTPLILTLNCTLL) form a helical membrane-spanning segment. Over 392–449 (LKTLGGYSWGLGPAPLLSPDPSSASAAPIGSGEDEVQQTAARIAGALGGLLTPLFLRG) the chain is Cytoplasmic. Residues 450-470 (VLAYLIWWTAACQLLASLFGL) traverse the membrane as a helical segment. Residues 471–479 (YFHQHLAGS) lie on the Extracellular side of the membrane.

Belongs to the TMEM161 family.

It localises to the membrane. May play a role in protection against oxidative stress. Overexpression leads to reduced levels of oxidant-induced DNA damage and apoptosis. The polypeptide is Transmembrane protein 161A (TMEM161A) (Homo sapiens (Human)).